A 454-amino-acid polypeptide reads, in one-letter code: uncharacterized protein (454 aa).

A signal peptide spans 1–18 (MRRFTLFVFFLSISIAYA).

This is an uncharacterized protein from Caenorhabditis elegans.